We begin with the raw amino-acid sequence, 962 residues long: Glycine dehydrogenase (decarboxylating) (962 aa).

Lys-709 is subject to N6-(pyridoxal phosphate)lysine.

It belongs to the GcvP family. In terms of assembly, the glycine cleavage system is composed of four proteins: P, T, L and H. Pyridoxal 5'-phosphate is required as a cofactor.

It catalyses the reaction N(6)-[(R)-lipoyl]-L-lysyl-[glycine-cleavage complex H protein] + glycine + H(+) = N(6)-[(R)-S(8)-aminomethyldihydrolipoyl]-L-lysyl-[glycine-cleavage complex H protein] + CO2. In terms of biological role, the glycine cleavage system catalyzes the degradation of glycine. The P protein binds the alpha-amino group of glycine through its pyridoxal phosphate cofactor; CO(2) is released and the remaining methylamine moiety is then transferred to the lipoamide cofactor of the H protein. This is Glycine dehydrogenase (decarboxylating) from Shewanella amazonensis (strain ATCC BAA-1098 / SB2B).